The following is a 259-amino-acid chain: Glutamate racemase (259 aa).

Residues 12–13 (DS) and 44–45 (YG) each bind substrate. Catalysis depends on Cys75, which acts as the Proton donor/acceptor. 76–77 (NT) provides a ligand contact to substrate. Cys186 acts as the Proton donor/acceptor in catalysis. 187–188 (TH) is a substrate binding site.

It belongs to the aspartate/glutamate racemases family.

It catalyses the reaction L-glutamate = D-glutamate. The protein operates within cell wall biogenesis; peptidoglycan biosynthesis. Provides the (R)-glutamate required for cell wall biosynthesis. The chain is Glutamate racemase from Clostridium novyi (strain NT).